The following is a 380-amino-acid chain: Phosphate acyltransferase (380 aa).

The tract at residues Met-1 to Gly-23 is disordered.

It belongs to the PlsX family. In terms of assembly, homodimer. Probably interacts with PlsY.

Its subcellular location is the cytoplasm. The catalysed reaction is a fatty acyl-[ACP] + phosphate = an acyl phosphate + holo-[ACP]. It participates in lipid metabolism; phospholipid metabolism. Functionally, catalyzes the reversible formation of acyl-phosphate (acyl-PO(4)) from acyl-[acyl-carrier-protein] (acyl-ACP). This enzyme utilizes acyl-ACP as fatty acyl donor, but not acyl-CoA. This Acidiphilium cryptum (strain JF-5) protein is Phosphate acyltransferase.